A 272-amino-acid polypeptide reads, in one-letter code: Indole-3-glycerol phosphate synthase (272 aa).

Belongs to the TrpC family.

It carries out the reaction 1-(2-carboxyphenylamino)-1-deoxy-D-ribulose 5-phosphate + H(+) = (1S,2R)-1-C-(indol-3-yl)glycerol 3-phosphate + CO2 + H2O. Its pathway is amino-acid biosynthesis; L-tryptophan biosynthesis; L-tryptophan from chorismate: step 4/5. In Mycolicibacterium gilvum (strain PYR-GCK) (Mycobacterium gilvum (strain PYR-GCK)), this protein is Indole-3-glycerol phosphate synthase.